A 216-amino-acid chain; its full sequence is Guanylate kinase (216 aa).

The 180-residue stretch at 12–191 (GLLFVISSPS…CVKQVKNILT (180 aa)) folds into the Guanylate kinase-like domain. ATP is bound at residue 19-26 (SPSGAGKS).

It belongs to the guanylate kinase family.

Its subcellular location is the cytoplasm. It carries out the reaction GMP + ATP = GDP + ADP. Its function is as follows. Essential for recycling GMP and indirectly, cGMP. The chain is Guanylate kinase from Zymomonas mobilis subsp. mobilis (strain ATCC 31821 / ZM4 / CP4).